Consider the following 224-residue polypeptide: ATP-dependent dethiobiotin synthetase BioD (224 aa).

14–19 (GIGKTV) lines the ATP pocket. A Mg(2+)-binding site is contributed by Thr-18. The active site involves Lys-39. Ser-43 serves as a coordination point for substrate. ATP-binding positions include Asp-56, 117–120 (EGVG), and 177–178 (NE). 2 residues coordinate Mg(2+): Asp-56 and Glu-117.

This sequence belongs to the dethiobiotin synthetase family. Homodimer. Mg(2+) serves as cofactor.

It localises to the cytoplasm. It carries out the reaction (7R,8S)-7,8-diammoniononanoate + CO2 + ATP = (4R,5S)-dethiobiotin + ADP + phosphate + 3 H(+). It participates in cofactor biosynthesis; biotin biosynthesis; biotin from 7,8-diaminononanoate: step 1/2. In terms of biological role, catalyzes a mechanistically unusual reaction, the ATP-dependent insertion of CO2 between the N7 and N8 nitrogen atoms of 7,8-diaminopelargonic acid (DAPA, also called 7,8-diammoniononanoate) to form a ureido ring. The chain is ATP-dependent dethiobiotin synthetase BioD from Xanthomonas campestris pv. campestris (strain 8004).